We begin with the raw amino-acid sequence, 188 residues long: dCTP deaminase (188 aa).

Residues 111-116 (KSTYAR), 135-137 (VLE), Gln156, Tyr170, and Gln180 contribute to the dCTP site. Glu137 acts as the Proton donor/acceptor in catalysis.

Belongs to the dCTP deaminase family. As to quaternary structure, homotrimer.

The enzyme catalyses dCTP + H2O + H(+) = dUTP + NH4(+). The protein operates within pyrimidine metabolism; dUMP biosynthesis; dUMP from dCTP (dUTP route): step 1/2. Functionally, catalyzes the deamination of dCTP to dUTP. In Protochlamydia amoebophila (strain UWE25), this protein is dCTP deaminase.